Here is a 357-residue protein sequence, read N- to C-terminus: MEENKQRVKSMINILQLVAPGTPLREGIDNVLRAQTGGLIVLGYNEQIKSIVDGGFHINCAFSPASLYELAKMDGALILNETGSKILIANAQLVPDPSIDSIETGMRHRTAERVAKQTASLVVAISQRRNVITLYQGNLRYTLKDIGVILTKANQAIQTLEKYKAVWNDGITNLGILEFEEVVTMSEVVHVLHSVEMVLRIKNEIVSYIHELGTEGRLIRLQLTELLADLEAEAALLIKDYYQEKTQDHHQILKKLQDLANTQLLEDSDLVKLLGYPGQMSLEESVTPRGYRIASKISRVPPLIIENLINRFKTLQGVCRATINELDDVEGIGEVRAKKIREGLKRIQEHLYMSRHN.

One can recognise a DAC domain in the interval 8 to 146 (VKSMINILQL…GNLRYTLKDI (139 aa)). ATP-binding positions include Gly75, Leu93, and 106 to 110 (MRHRT).

Belongs to the DisA family. In terms of assembly, homooctamer. Requires Mg(2+) as cofactor.

The catalysed reaction is 2 ATP = 3',3'-c-di-AMP + 2 diphosphate. Its function is as follows. Participates in a DNA-damage check-point that is active prior to asymmetric division when DNA is damaged. DisA forms globular foci that rapidly scan along the chromosomes during sporulation, searching for lesions. When a lesion is present, DisA pauses at the lesion site. This triggers a cellular response that culminates in a temporary block in sporulation initiation. Functionally, also has diadenylate cyclase activity, catalyzing the condensation of 2 ATP molecules into cyclic di-AMP (c-di-AMP). c-di-AMP acts as a signaling molecule that couples DNA integrity with progression of sporulation. The rise in c-di-AMP level generated by DisA while scanning the chromosome, operates as a positive signal that advances sporulation; upon encountering a lesion, the DisA focus arrests at the damaged site and halts c-di-AMP synthesis. This Bacillus mycoides (strain KBAB4) (Bacillus weihenstephanensis) protein is DNA integrity scanning protein DisA.